We begin with the raw amino-acid sequence, 432 residues long: Actin-related protein 4 (432 aa).

This sequence belongs to the actin family. ARP4 subfamily. In terms of assembly, component of the NuA4 histone acetyltransferase complex, of the INO80 chromatin remodeling complex, and of the SWR1 chromatin remodeling complex.

The protein resides in the nucleus. Its function is as follows. Chromatin interaction component of the NuA4 histone acetyltransferase complex which is involved in transcriptional activation of selected genes principally by acetylation of nucleosomal histone H4 and H2A. The NuA4 complex is also involved in DNA repair. Is required for NuA4 complex integrity. Component of the SWR1 complex which mediates the ATP-dependent exchange of histone H2A for the H2A variant HZT1 leading to transcriptional regulation of selected genes by chromatin remodeling. Component of the INO80 complex which remodels chromatin by shifting nucleosomes and is involved in DNA repair. This is Actin-related protein 4 (ARP4) from Yarrowia lipolytica (strain CLIB 122 / E 150) (Yeast).